Consider the following 505-residue polypeptide: Histidine ammonia-lyase (505 aa).

A cross-link (5-imidazolinone (Ala-Gly)) is located at residues 141-143 (ASG). Ser142 is subject to 2,3-didehydroalanine (Ser).

Belongs to the PAL/histidase family. In terms of processing, contains an active site 4-methylidene-imidazol-5-one (MIO), which is formed autocatalytically by cyclization and dehydration of residues Ala-Ser-Gly.

It is found in the cytoplasm. The enzyme catalyses L-histidine = trans-urocanate + NH4(+). It functions in the pathway amino-acid degradation; L-histidine degradation into L-glutamate; N-formimidoyl-L-glutamate from L-histidine: step 1/3. The sequence is that of Histidine ammonia-lyase from Bacillus thuringiensis subsp. konkukian (strain 97-27).